The primary structure comprises 292 residues: MSMPATSTKTTKLATSLIDEYALLGWRAMLTEVNLSPKPGLVDRINCGAHKDMALEDFHRSALAIQGWLPRFIEFGACSAEMAPEAVLHGLRPIGMACEGDMFRATAGVNTHKGSIFSLGLLCAAIGRLLQLNQPVTPTTVCSTAASFCRGLTDRELRTNNSRLTAGQRLYQQLGLTGARGEAEAGYPLVINHALPHYLTLLDQGLDPELALLDTLLLLMATNGDTNVASRGGEGGLRWLQREAQTLLQKGGIRTPTDLDYLRQFDRECIERNLSPGGSADLLILTCFLAQI.

The protein belongs to the CitG/MdcB family.

It catalyses the reaction 3'-dephospho-CoA + ATP = 2'-(5''-triphospho-alpha-D-ribosyl)-3'-dephospho-CoA + adenine. This Shigella flexneri protein is Probable 2-(5''-triphosphoribosyl)-3'-dephosphocoenzyme-A synthase.